We begin with the raw amino-acid sequence, 777 residues long: uncharacterized protein (777 aa).

Disordered stretches follow at residues 1-101, 128-150, 219-267, 334-366, 391-466, 529-577, 590-622, and 713-751; these read MNNN…NLSN, SYNN…NDDN, HHIH…NNMN, SLPF…GIDD, ISNS…ATIS, KNLN…NNKG, LAQE…ISTI, and EKQG…KWKP. Composition is skewed to low complexity over residues 128-147 and 243-265; these read SYNN…NNIN and NNNN…NHNN. The segment covering 334–343 has biased composition (polar residues); it reads SLPFSSLSDN. The segment covering 344–366 has biased composition (acidic residues); it reads NGDDDDDGIDDGIDDGIDDGIDD. The segment covering 391-407 has biased composition (polar residues); that stretch reads ISNSFHQNQSPCNNSFK. Low complexity-rich tracts occupy residues 408-466 and 532-574; these read NNNN…ATIS and NNNN…NNKN. Over residues 597–606 the composition is skewed to basic and acidic residues; that stretch reads EQNKTKKELE. Composition is skewed to acidic residues over residues 607-620 and 718-730; these read EVKE…EEIS and DDPE…DSDS. Over residues 731–740 the composition is skewed to low complexity; it reads DSNSNSDSSD.

This is an uncharacterized protein from Dictyostelium discoideum (Social amoeba).